We begin with the raw amino-acid sequence, 73 residues long: Translation initiation factor IF-1 (73 aa).

An S1-like domain is found at 1 to 73 (MDIKEEAIET…TKGRIVYREK (73 aa)).

The protein belongs to the IF-1 family. Component of the 30S ribosomal translation pre-initiation complex which assembles on the 30S ribosome in the order IF-2 and IF-3, IF-1 and N-formylmethionyl-tRNA(fMet); mRNA recruitment can occur at any time during PIC assembly.

It is found in the cytoplasm. In terms of biological role, one of the essential components for the initiation of protein synthesis. Stabilizes the binding of IF-2 and IF-3 on the 30S subunit to which N-formylmethionyl-tRNA(fMet) subsequently binds. Helps modulate mRNA selection, yielding the 30S pre-initiation complex (PIC). Upon addition of the 50S ribosomal subunit IF-1, IF-2 and IF-3 are released leaving the mature 70S translation initiation complex. This chain is Translation initiation factor IF-1, found in Borreliella afzelii (strain PKo) (Borrelia afzelii).